The primary structure comprises 161 residues: Glutaredoxin-2, mitochondrial (161 aa).

Residues 1–19 (MLWRRAALAGTRLVWSRSG) constitute a mitochondrion transit peptide. Residue serine 20 is modified to Phosphoserine. A Glutaredoxin domain is found at 54 to 154 (VNQIQETISD…PLVHQCYLKK (101 aa)). Residue cysteine 65 participates in [2Fe-2S] cluster binding. Lysine 71 provides a ligand contact to glutathione. S-glutathionyl cysteine; alternate is present on cysteine 74. Residues cysteine 74 and cysteine 77 are joined by a disulfide bond. Residues glutamine 106 and valine 118 each coordinate glutathione. Cysteine 150 is a binding site for [2Fe-2S] cluster.

The protein belongs to the glutaredoxin family. As to quaternary structure, monomer; active form. Homodimer; inactive form. The homodimer is probably linked by 1 2Fe-2S cluster.

It localises to the mitochondrion. The 2Fe-2S present in the homodimer leads to inactivation of the enzyme. The 2Fe-2S may serve as a redox sensor: the presence of one-electron oxidants or reductants leading to the loss of the 2Fe-2S cluster, subsequent monomerization and activation of the enzyme. Functionally, glutathione-dependent oxidoreductase that facilitates the maintenance of mitochondrial redox homeostasis upon induction of apoptosis by oxidative stress. Involved in response to hydrogen peroxide and regulation of apoptosis caused by oxidative stress. Acts as a very efficient catalyst of monothiol reactions because of its high affinity for protein glutathione-mixed disulfides. Can receive electrons not only from glutathione (GSH), but also from thioredoxin reductase supporting both monothiol and dithiol reactions. Efficiently catalyzes both glutathionylation and deglutathionylation of mitochondrial complex I, which in turn regulates the superoxide production by the complex. Overexpression decreases the susceptibility to apoptosis and prevents loss of cardiolipin and cytochrome c release. The protein is Glutaredoxin-2, mitochondrial (GLRX2) of Pongo abelii (Sumatran orangutan).